The chain runs to 59 residues: MRIKVKLVRGLAGKRKDQIKAVRSLGLKKVNDERILEKNPMVLGNINKVKHLIQVEEVE.

The protein belongs to the universal ribosomal protein uL30 family. Part of the 50S ribosomal subunit.

This is Large ribosomal subunit protein uL30 from Persephonella marina (strain DSM 14350 / EX-H1).